The sequence spans 53 residues: ATP synthase protein 8 (53 aa).

Residues 9-29 (WLILFFIFSITLVIFNILNYF) form a helical membrane-spanning segment.

This sequence belongs to the ATPase protein 8 family. As to quaternary structure, F-type ATPases have 2 components, CF(1) - the catalytic core - and CF(0) - the membrane proton channel.

It localises to the mitochondrion membrane. Mitochondrial membrane ATP synthase (F(1)F(0) ATP synthase or Complex V) produces ATP from ADP in the presence of a proton gradient across the membrane which is generated by electron transport complexes of the respiratory chain. F-type ATPases consist of two structural domains, F(1) - containing the extramembraneous catalytic core and F(0) - containing the membrane proton channel, linked together by a central stalk and a peripheral stalk. During catalysis, ATP synthesis in the catalytic domain of F(1) is coupled via a rotary mechanism of the central stalk subunits to proton translocation. Part of the complex F(0) domain. Minor subunit located with subunit a in the membrane. This is ATP synthase protein 8 (mt:ATPase8) from Anopheles quadrimaculatus (Common malaria mosquito).